Here is a 187-residue protein sequence, read N- to C-terminus: Peroxisome assembly protein 22 (187 aa).

Residues 7–29 (NTFFGLAALGALGLGYSVYKSFI) traverse the membrane as a helical segment.

This sequence belongs to the peroxin-22 family. As to quaternary structure, interacts with PEX4.

The protein resides in the peroxisome membrane. In terms of biological role, involved in peroxisome biogenesis. This is Peroxisome assembly protein 22 (PEX22) from Komagataella pastoris (Yeast).